The primary structure comprises 86 residues: High affinity immunoglobulin epsilon receptor subunit gamma (86 aa).

Positions 1–18 are cleaved as a signal peptide; that stretch reads MIPAVVLLLLLLVEQAAA. The Extracellular portion of the chain corresponds to 19-23; it reads LGEPQ. The chain crosses the membrane as a helical span at residues 24 to 44; the sequence is LCYILDAILFLYGIVLTLLYC. Over 45–86 the chain is Cytoplasmic; that stretch reads RLKLQVRKAAIDSYEKSDGVYTGLSTRNQETYETLKHEKPPQ. An ITAM domain is found at 54–82; that stretch reads AIDSYEKSDGVYTGLSTRNQETYETLKHE. Y65 carries the post-translational modification Phosphotyrosine. S69 carries the post-translational modification Phosphoserine. Position 76 is a phosphotyrosine (Y76). T78 bears the Phosphothreonine mark.

This sequence belongs to the CD3Z/FCER1G family. As to quaternary structure, igE Fc receptor is a tetramer of an alpha chain, a beta chain, and two disulfide linked gamma chains. Associates with FCGR1A; forms a functional signaling complex. The signaling subunit of immunoglobulin gamma (IgG) Fc receptor complex. As a homodimer or a heterodimer of CD247 and FCER1G, associates with the ligand binding subunit FCGR3A to form a functional receptor complex. Associates with CLEC6A. Interacts with CLEC4E. Interacts (via ITAM domain) with SYK (via SH2 domains); activates SYK, enabling integrin-mediated activation of neutrophils and macrophages. Interacts with common beta chain of interleukin 3 receptor CSF2RB and recruits SYK in response to IL3 stimulation; this interaction is direct. Interacts with CD300LH; the interaction may be indirect. Interacts with CD300LD. Interacts with TARM1.

Its subcellular location is the cell membrane. Its function is as follows. Adapter protein containing an immunoreceptor tyrosine-based activation motif (ITAM) that transduces activation signals from various immunoreceptors. As a component of the high-affinity immunoglobulin E (IgE) receptor, mediates allergic inflammatory signaling in mast cells. As a constitutive component of interleukin-3 receptor complex, selectively mediates interleukin 4/IL4 production b basophils priming T-cells toward effector T-helper 2 subset. Associates with pattern recognition receptors CLEC4D and CLEC4E to form a functional signaling complex in myeloid cells. Binding of mycobacterial trehalose 6,6'-dimycolate (TDM) to this receptor complex leads to phosphorylation of ITAM, triggering activation of SYK, CARD9 and NF-kappa-B, consequently driving maturation of antigen-presenting cells and shaping antigen-specific priming of T-cells toward effector T-helper 1 and T-helper 17 cell subtypes. May function cooperatively with other activating receptors. Functionally linked to integrin beta-2/ITGB2-mediated neutrophil activation. Also involved in integrin alpha-2/ITGA2-mediated platelet activation. This Sus scrofa (Pig) protein is High affinity immunoglobulin epsilon receptor subunit gamma (FCER1G).